The sequence spans 975 residues: NLR family member X1 (975 aa).

The N-terminal 86 residues, 1 to 86 (MRWGHHLPRA…EAIQRHRRNL (86 aa)), are a transit peptide targeting the mitochondrion. Positions 75–556 (ATEAIQRHRR…RALPLLFNLI (482 aa)) are required for interaction with MAVS. Residues 160 to 483 (QTVVLYGTVG…LRFFLAPCVE (324 aa)) enclose the NACHT domain. An ATP-binding site is contributed by 166-173 (GTVGTGKS). A required for the repression of MAVS-induced interferon signaling region spans residues 556–974 (IKVVPRVFGR…ALLEQLGSSG (419 aa)). The LRRNT domain occupies 667–694 (RQVLPPSELLDHLFFHYEFQNQRFSAEV). LRR repeat units follow at residues 695–718 (LSSLRQLNLAGVRMTPVKCTVVAA), 724–747 (RHALDEVNLASCQLDPAGLRTLLP), 749–777 (FLRARKLGLQLNSLGPEACKDLRDLLLHD), 778–801 (QCQITTLRLSNNPLTAAGVAVLME), 811–834 (HLSLLHTGLGDEGLELLAAQLDRN), 835–857 (RQLQELNVAYNGAGDTAALALAR), 858–877 (AAREHPSLELLHLYFNELSS), and 878–899 (EGRQVLRDLGGAAEGGARVVVS). The region spanning 906–970 (VSEYWSVILS…GEVRALLEQL (65 aa)) is the LRRCT domain.

The protein belongs to the NLRP family. In terms of assembly, homohexamer. Interacts with MAVS. Interacts with TUFM. (Microbial infection) Interacts with influenza A virus protein PB1-F2. In terms of tissue distribution, ubiquitously expressed. Strongest expression in mammary gland, heart and muscle. Detected in HeLa, HEK293T, THP-1, HL-60, Raji and Jurkat cell lines (at protein level).

It localises to the mitochondrion outer membrane. Functionally, participates in antiviral signaling. Acts as a negative regulator of MAVS-mediated antiviral responses, through the inhibition of the virus-induced RLH (RIG-like helicase)-MAVS interaction. Instead, promotes autophagy by interacting with TUFM and subsequently recruiting the autophagy-related proteins ATG5 and ATG12. Also regulates MAVS-dependent NLRP3 inflammasome activation to attenuate apoptosis. Has no inhibitory function on NF-kappa-B signaling pathway, but enhances NF-kappa-B and JUN N-terminal kinase dependent signaling through the production of reactive oxygen species. Regulates viral mediated-inflammation and energy metabolism in a sex-dependent manner. In females, prevents uncontrolled inflammation and energy metabolism and thus, may contribute to the sex differences observed in infectious and inflammatory diseases. The chain is NLR family member X1 (NLRX1) from Homo sapiens (Human).